A 160-amino-acid chain; its full sequence is Putative 4-hydroxy-4-methyl-2-oxoglutarate aldolase (160 aa).

Residues 75–78 and R97 contribute to the substrate site; that span reads GDLI. Position 98 (D98) interacts with a divalent metal cation.

It belongs to the class II aldolase/RraA-like family. In terms of assembly, homotrimer. It depends on a divalent metal cation as a cofactor.

It catalyses the reaction 4-hydroxy-4-methyl-2-oxoglutarate = 2 pyruvate. It carries out the reaction oxaloacetate + H(+) = pyruvate + CO2. Functionally, catalyzes the aldol cleavage of 4-hydroxy-4-methyl-2-oxoglutarate (HMG) into 2 molecules of pyruvate. Also contains a secondary oxaloacetate (OAA) decarboxylase activity due to the common pyruvate enolate transition state formed following C-C bond cleavage in the retro-aldol and decarboxylation reactions. This Rhodospirillum centenum (strain ATCC 51521 / SW) protein is Putative 4-hydroxy-4-methyl-2-oxoglutarate aldolase.